A 93-amino-acid chain; its full sequence is UPF0337 protein Bd3330 (93 aa).

The protein belongs to the UPF0337 (CsbD) family.

In Bdellovibrio bacteriovorus (strain ATCC 15356 / DSM 50701 / NCIMB 9529 / HD100), this protein is UPF0337 protein Bd3330.